Here is a 416-residue protein sequence, read N- to C-terminus: Trehalose synthase (416 aa).

It belongs to the glycosyltransferase group 1 family. Glycosyltransferase 4 subfamily. As to quaternary structure, homodimer. The cofactor is Mg(2+).

The enzyme catalyses an NDP-alpha-D-glucose + D-glucose = alpha,alpha-trehalose + a ribonucleoside 5'-diphosphate + H(+). Its activity is regulated as follows. Inhibited by 20 mM Fe(3+) and Mn(2+). Partially inhibited by Zn(2+) and Ni(2+). Activity is slightly enhanced by 2 mM Fe (3+), Mn (2+), Ca(2+) or Li(+) and by 20 mM Mg(2+), Ca(2+) or Li(+). Its function is as follows. Synthesizes trehalose from ADP-glucose and glucose. The reaction is reversible, the equilibrium strongly favors trehalose synthesis. This is Trehalose synthase from Rubrobacter xylanophilus (strain DSM 9941 / JCM 11954 / NBRC 16129 / PRD-1).